Consider the following 21-residue polypeptide: DYE-linked aldehyde dehydrogenase, gamma chain (21 aa).

Heterotetramer composed of an alpha, a beta and two gamma chains. [2Fe-2S] cluster serves as cofactor.

Its function is as follows. Active with aldehydes and formate esters as substrates. This Amycolatopsis methanolica protein is DYE-linked aldehyde dehydrogenase, gamma chain.